A 259-amino-acid polypeptide reads, in one-letter code: Protein GrpE (259 aa).

Disordered stretches follow at residues 1–75 and 227–259; these read MNSD…KGSD and GPGPKAVNEEIPDQSASNQELSESVDGPTKDEN. A compositionally biased stretch (low complexity) spans 20 to 40; it reads NNPSENFVSSSNSNESVNQVE. Positions 46–60 are enriched in basic and acidic residues; that stretch reads EVEHQVKNDSVDTAK. Residues 61 to 73 show a composition bias toward polar residues; sequence EQSSTSCESNIKG.

This sequence belongs to the GrpE family. As to quaternary structure, homodimer.

Its subcellular location is the cytoplasm. Its function is as follows. Participates actively in the response to hyperosmotic and heat shock by preventing the aggregation of stress-denatured proteins, in association with DnaK and GrpE. It is the nucleotide exchange factor for DnaK and may function as a thermosensor. Unfolded proteins bind initially to DnaJ; upon interaction with the DnaJ-bound protein, DnaK hydrolyzes its bound ATP, resulting in the formation of a stable complex. GrpE releases ADP from DnaK; ATP binding to DnaK triggers the release of the substrate protein, thus completing the reaction cycle. Several rounds of ATP-dependent interactions between DnaJ, DnaK and GrpE are required for fully efficient folding. The chain is Protein GrpE from Prochlorococcus marinus (strain NATL1A).